Here is a 504-residue protein sequence, read N- to C-terminus: Sodium/proline symporter (504 aa).

Transmembrane regions (helical) follow at residues 8–28 (LITF…AYYY), 50–70 (SAGA…AVYL), 73–93 (LVEG…WLLV), 127–147 (LVSA…GVVA), 163–183 (ALWY…FLAV), 189–209 (IQAT…LLSF), 240–260 (LGLL…HILA), 281–301 (WMVL…PYFF), 324–344 (LLFN…AVMS), 374–394 (ELVW…IWIA), 405–425 (VEFA…FSLF), 434–454 (AMAG…VVPA), and 461–481 (VYEM…ISLL).

The protein belongs to the sodium:solute symporter (SSF) (TC 2.A.21) family.

Its subcellular location is the cell inner membrane. The catalysed reaction is L-proline(in) + Na(+)(in) = L-proline(out) + Na(+)(out). Functionally, catalyzes the sodium-dependent uptake of extracellular L-proline. This chain is Sodium/proline symporter (putP), found in Haemophilus influenzae (strain ATCC 51907 / DSM 11121 / KW20 / Rd).